The chain runs to 569 residues: Adenine deaminase (569 aa).

It belongs to the metallo-dependent hydrolases superfamily. Adenine deaminase family. Mn(2+) serves as cofactor.

The catalysed reaction is adenine + H2O + H(+) = hypoxanthine + NH4(+). The protein is Adenine deaminase of Desulfitobacterium hafniense (strain Y51).